Consider the following 395-residue polypeptide: Chorismate synthase (395 aa).

Arg-48 is a binding site for NADP(+). 125–127 (RSS) lines the FMN pocket. The interval 264–292 (RNEDWTFDDGESFDHVESEEGDPVPVGND) is disordered. FMN is bound by residues Gly-298, 313–317 (HAPTS), and Arg-340. The tract at residues 373–395 (PDRVDGNPGQYDTDYHPSSPDND) is disordered.

The protein belongs to the chorismate synthase family. FMNH2 is required as a cofactor.

The enzyme catalyses 5-O-(1-carboxyvinyl)-3-phosphoshikimate = chorismate + phosphate. Its pathway is metabolic intermediate biosynthesis; chorismate biosynthesis; chorismate from D-erythrose 4-phosphate and phosphoenolpyruvate: step 7/7. Functionally, catalyzes the anti-1,4-elimination of the C-3 phosphate and the C-6 proR hydrogen from 5-enolpyruvylshikimate-3-phosphate (EPSP) to yield chorismate, which is the branch point compound that serves as the starting substrate for the three terminal pathways of aromatic amino acid biosynthesis. This reaction introduces a second double bond into the aromatic ring system. In Halorubrum lacusprofundi (strain ATCC 49239 / DSM 5036 / JCM 8891 / ACAM 34), this protein is Chorismate synthase.